The sequence spans 358 residues: Na(+)/H(+) exchange regulatory cofactor NHE-RF1 (358 aa).

Ser-2 is modified (N-acetylserine). Residues Ser-2 and Ser-46 each carry the phosphoserine modification. One can recognise a PDZ 1 domain in the interval 14-94 (LCCLEKGPNG…AVRLLVVDPD (81 aa)). Over residues 114–134 (QAGPEQAGPPAAPGEQGPAGE) the composition is skewed to low complexity. The interval 114-151 (QAGPEQAGPPAAPGEQGPAGENEPREVEKSHPERRELR) is disordered. Residues 135–151 (NEPREVEKSHPERRELR) show a composition bias toward basic and acidic residues. The PDZ 2 domain occupies 154–234 (LCAMKKGPNG…EAKLLVVDKE (81 aa)). The segment at 247 to 358 (SSEHLNGPLP…SEKKELFSNL (112 aa)) is disordered. Residues 272-290 (LAPAASESPRPALARSASS) are compositionally biased toward low complexity. Ser-279, Ser-289, and Ser-290 each carry phosphoserine. Residue Thr-292 is modified to Phosphothreonine. A phosphoserine mark is found at Ser-293, Ser-298, and Ser-301. Residues 308-327 (TAPSSTSSSSDPILDFSISL) show a composition bias toward low complexity. The span at 348-358 (WSEKKELFSNL) shows a compositional bias: basic and acidic residues.

As to quaternary structure, homodimer, and heterodimer with NHERF2. Binds the N-termini of EZR, RDX and MSN. Binds the C-termini of PDGFRA, PDGFRB, ADRB2, NOS2 and CFTR. Binds ARHGAP17, EPI64, RACK1, OPRK1, GNAQ, CTNNB1 and PLCB3. Binds PDZK1. Interacts with CLCN3. Binds the C-terminus of PAG1. In resting T-cells, part of a PAG1-NHERF1-MSN complex which is disrupted upon TCR activation. Forms a complex with CFTR and SLC4A7. Forms a complex with SLC4A7 and ATP6V1B1. Interacts with TRPC4 (via the PDZ-binding domain). Directly interacts with HTR4. Interacts (via the PDZ 1 domain) with PODXL (via the C-terminal PDZ-binding motif DTHL); interaction is not detected in glomerular epithelium cells. Interacts (via the PDZ 1 domain) with PODXL (via the C-terminal PDZ-binding motif DTHL); the interaction take place early in the secretory pathway and is necessary for its apical membrane sorting. Interacts with SLC26A3. Interacts with MCC. Interacts with SLC34A1. Interacts (via the PDZ domains) with SLC26A6 isoform 4 and isoform 5. Interacts (via PDZ domains) with ACE2 (via PDZ-binding motif); the interaction may enhance ACE2 membrane residence. In terms of processing, phosphorylated on serine residues. In terms of tissue distribution, detected in ileum, duodenum and in kidney, where it is found in the glomerulus, the proximal tubule, the thick ascending limb of Henle's loop and the cortical collecting duct.

The protein resides in the cytoplasm. It localises to the apical cell membrane. Its subcellular location is the cell projection. The protein localises to the filopodium. It is found in the ruffle. The protein resides in the microvillus. It localises to the endomembrane system. Functionally, scaffold protein that connects plasma membrane proteins with members of the ezrin/moesin/radixin family and thereby helps to link them to the actin cytoskeleton and to regulate their surface expression. Necessary for recycling of internalized ADRB2. Was first known to play a role in the regulation of the activity and subcellular location of SLC9A3. Necessary for cAMP-mediated phosphorylation and inhibition of SLC9A3. Involved in sperm capacitation. May participate in the regulation of the chloride and bicarbonate homeostasis in spermatozoa. May enhance Wnt signaling. May participate in HTR4 targeting to microvilli. Involved in the regulation of phosphate reabsorption in the renal proximal tubules. The sequence is that of Na(+)/H(+) exchange regulatory cofactor NHE-RF1 (NHERF1) from Oryctolagus cuniculus (Rabbit).